The chain runs to 191 residues: Guanylate kinase (191 aa).

In terms of domain architecture, Guanylate kinase-like spans 8 to 188; that stretch reads GRLVVLAGPS…AVSDIKEILV (181 aa). 15–22 contacts ATP; the sequence is GPSAVGKS.

Belongs to the guanylate kinase family.

It localises to the cytoplasm. The enzyme catalyses GMP + ATP = GDP + ADP. Its function is as follows. Essential for recycling GMP and indirectly, cGMP. The chain is Guanylate kinase from Corynebacterium diphtheriae (strain ATCC 700971 / NCTC 13129 / Biotype gravis).